Here is a 208-residue protein sequence, read N- to C-terminus: Redox-sensing transcriptional repressor Rex (208 aa).

A DNA-binding region (H-T-H motif) is located at residues 16–55 (LYYRCLSELNEKGEDKVSSAVLERLLKIDAATVRRDFSYF). 90–95 (GVGNLG) contributes to the NAD(+) binding site.

This sequence belongs to the transcriptional regulatory Rex family. In terms of assembly, homodimer.

It localises to the cytoplasm. Modulates transcription in response to changes in cellular NADH/NAD(+) redox state. This Pediococcus pentosaceus (strain ATCC 25745 / CCUG 21536 / LMG 10740 / 183-1w) protein is Redox-sensing transcriptional repressor Rex.